The chain runs to 373 residues: 3 beta-hydroxysteroid dehydrogenase/Delta 5--&gt;4-isomerase type 1 (373 aa).

NADP(+)-binding positions include 10–15, Tyr155, and Lys159; that span reads GAGGFL. Residue Lys159 is the Proton donor of the active site. Residues 288 to 308 traverse the membrane as a helical segment; sequence VALLYWLGFLLELVSFLLRPV.

The protein belongs to the 3-beta-HSD family. In terms of tissue distribution, high levels in adrenal gland, kidney and male liver. Low levels in female liver.

Its subcellular location is the endoplasmic reticulum membrane. It is found in the mitochondrion membrane. The catalysed reaction is a 3beta-hydroxy-Delta(5)-steroid + NAD(+) = a 3-oxo-Delta(5)-steroid + NADH + H(+). It catalyses the reaction pregnenolone + NAD(+) = pregn-5-ene-3,20-dione + NADH + H(+). The enzyme catalyses 3beta-hydroxyandrost-5-en-17-one + NAD(+) = androst-5-ene-3,17-dione + NADH + H(+). It carries out the reaction androst-5-en-3beta,17beta-diol + NAD(+) = 17beta-hydroxy-androst-5-en-3-one + NADH + H(+). The catalysed reaction is a 3beta-hydroxysteroid + NADP(+) = a 3-oxosteroid + NADPH + H(+). It catalyses the reaction 5alpha-androstane-3beta,17beta-diol + NADP(+) = 17beta-hydroxy-5alpha-androstan-3-one + NADPH + H(+). The enzyme catalyses 3beta-hydroxy-5alpha-androstan-17-one + NADP(+) = 5alpha-androstan-3,17-dione + NADPH + H(+). It carries out the reaction a 3-oxo-Delta(5)-steroid = a 3-oxo-Delta(4)-steroid. The catalysed reaction is pregn-5-ene-3,20-dione = progesterone. It catalyses the reaction androst-5-ene-3,17-dione = androst-4-ene-3,17-dione. The enzyme catalyses 17beta-hydroxy-androst-5-en-3-one = testosterone. It carries out the reaction 5alpha-androstane-3beta,17beta-diol + NAD(+) = 17beta-hydroxy-5alpha-androstan-3-one + NADH + H(+). Its pathway is steroid hormone biosynthesis. It participates in steroid metabolism. A bifunctional enzyme responsible for the oxidation and isomerization of 3beta-hydroxy-Delta(5)-steroid precursors to 3-oxo-Delta(4)-steroids, an essential step in steroid hormone biosynthesis. Specifically catalyzes the conversion of pregnenolone to progesterone, 17alpha-hydroxypregnenolone to 17alpha-hydroxyprogesterone, dehydroepiandrosterone (DHEA) to 4-androstenedione, and androstenediol to testosterone. Additionally, catalyzes the interconversion between 3beta-hydroxy and 3-oxo-5alpha-androstane steroids controlling the bioavalability of the active forms. Specifically converts dihydrotestosterone to its inactive form 5alpha-androstanediol, that does not bind androgen receptor/AR. Also converts androstanedione, a precursor of testosterone and estrone, to epiandrosterone. Expected to use NAD(+) as preferred electron donor for the 3-beta-hydroxy-steroid dehydrogenase activity and NADPH for the 3-ketosteroid reductase activity. The chain is 3 beta-hydroxysteroid dehydrogenase/Delta 5--&gt;4-isomerase type 1 (HSD3B1) from Mesocricetus auratus (Golden hamster).